Consider the following 174-residue polypeptide: Adenylate kinase (174 aa).

Positions 12-41 are NMP; the sequence is STGDMLRAAIKAGTPLGLEAKKIIDEGGLV. Residues Thr-13, Arg-18, 39–41, 67–70, and Gln-74 contribute to the AMP site; these read GLV and GFPR. An LID region spans residues 104–141; it reads GRRVHLASGRTYHVTYNPPKVEGKDDVTGEDLIQRDDD. ATP-binding positions include Arg-105 and 114-115; that span reads TY. Residues Arg-138 and Arg-149 each coordinate AMP.

The protein belongs to the adenylate kinase family. As to quaternary structure, monomer.

The protein resides in the cytoplasm. The enzyme catalyses AMP + ATP = 2 ADP. The protein operates within purine metabolism; AMP biosynthesis via salvage pathway; AMP from ADP: step 1/1. Functionally, catalyzes the reversible transfer of the terminal phosphate group between ATP and AMP. Plays an important role in cellular energy homeostasis and in adenine nucleotide metabolism. The sequence is that of Adenylate kinase from Neisseria flavescens.